Consider the following 554-residue polypeptide: Glucose-6-phosphate isomerase (554 aa).

The active-site Proton donor is E359. Residues H390 and K518 contribute to the active site.

Belongs to the GPI family.

The protein resides in the cytoplasm. It catalyses the reaction alpha-D-glucose 6-phosphate = beta-D-fructose 6-phosphate. It functions in the pathway carbohydrate biosynthesis; gluconeogenesis. It participates in carbohydrate degradation; glycolysis; D-glyceraldehyde 3-phosphate and glycerone phosphate from D-glucose: step 2/4. Catalyzes the reversible isomerization of glucose-6-phosphate to fructose-6-phosphate. This Stutzerimonas stutzeri (strain A1501) (Pseudomonas stutzeri) protein is Glucose-6-phosphate isomerase.